The following is a 177-amino-acid chain: Small ribosomal subunit protein bS21m (177 aa).

The N-terminal 17 residues, 1–17 (MLKSTLRLSRISLRRGF), are a transit peptide targeting the mitochondrion.

Belongs to the bacterial ribosomal protein bS21 family. In terms of assembly, component of the mitochondrial small ribosomal subunit (mt-SSU). Mature yeast 74S mitochondrial ribosomes consist of a small (37S) and a large (54S) subunit. The 37S small subunit contains a 15S ribosomal RNA (15S mt-rRNA) and 34 different proteins. The 54S large subunit contains a 21S rRNA (21S mt-rRNA) and 46 different proteins.

It localises to the mitochondrion. In terms of biological role, component of the mitochondrial ribosome (mitoribosome), a dedicated translation machinery responsible for the synthesis of mitochondrial genome-encoded proteins, including at least some of the essential transmembrane subunits of the mitochondrial respiratory chain. The mitoribosomes are attached to the mitochondrial inner membrane and translation products are cotranslationally integrated into the membrane. The chain is Small ribosomal subunit protein bS21m (MRP21) from Saccharomyces cerevisiae (strain ATCC 204508 / S288c) (Baker's yeast).